We begin with the raw amino-acid sequence, 272 residues long: Hemin import ATP-binding protein HmuV (272 aa).

The ABC transporter domain maps to 2–255; it reads LNADHLHVAR…EPIARCYGFR (254 aa). 34-41 contributes to the ATP binding site; that stretch reads GRNGAGKS.

The protein belongs to the ABC transporter superfamily. Heme (hemin) importer (TC 3.A.1.14.5) family. In terms of assembly, the complex is composed of two ATP-binding proteins (HmuV), two transmembrane proteins (HmuU) and a solute-binding protein (HmuT).

Its subcellular location is the cell inner membrane. Part of the ABC transporter complex HmuTUV involved in hemin import. Responsible for energy coupling to the transport system. In Burkholderia mallei (strain ATCC 23344), this protein is Hemin import ATP-binding protein HmuV.